Consider the following 196-residue polypeptide: 3-isopropylmalate dehydratase small subunit (196 aa).

This sequence belongs to the LeuD family. LeuD type 1 subfamily. Heterodimer of LeuC and LeuD.

The enzyme catalyses (2R,3S)-3-isopropylmalate = (2S)-2-isopropylmalate. It participates in amino-acid biosynthesis; L-leucine biosynthesis; L-leucine from 3-methyl-2-oxobutanoate: step 2/4. Its function is as follows. Catalyzes the isomerization between 2-isopropylmalate and 3-isopropylmalate, via the formation of 2-isopropylmaleate. The protein is 3-isopropylmalate dehydratase small subunit of Streptococcus thermophilus (strain CNRZ 1066).